The primary structure comprises 236 residues: Predicted GPI-anchored protein 43 (236 aa).

Residues 1-24 (MHQRNHHSILLTLLLYLQSIVALA) form the signal peptide. Residues N192, N195, and N198 are each glycosylated (N-linked (GlcNAc...) asparagine). G208 carries the GPI-anchor amidated glycine lipid modification. A propeptide spans 209 to 236 (SVCLTSSYLNSPIIILCAILTGTLFAMY) (removed in mature form).

The protein resides in the cell membrane. The sequence is that of Predicted GPI-anchored protein 43 (PGA43) from Candida albicans (strain SC5314 / ATCC MYA-2876) (Yeast).